A 564-amino-acid polypeptide reads, in one-letter code: Probable diguanylate cyclase DgcQ (564 aa).

Helical transmembrane passes span 20–40 and 360–380; these read LGPG…STLL and IALT…WYVI. The 136-residue stretch at 428–563 folds into the GGDEF domain; the sequence is HPFSVIQVDL…GRNRVFASDN (136 aa). Asp436 is a Mg(2+) binding site. Residues Asn444, His449, and Asp453 each contribute to the substrate site. Position 479 (Glu479) interacts with Mg(2+). Glu479 (proton acceptor) is an active-site residue.

As to quaternary structure, homodimer. Requires Mg(2+) as cofactor.

The protein resides in the cell inner membrane. It catalyses the reaction 2 GTP = 3',3'-c-di-GMP + 2 diphosphate. It functions in the pathway glycan metabolism; bacterial cellulose biosynthesis. It participates in purine metabolism; 3',5'-cyclic di-GMP biosynthesis. In terms of biological role, catalyzes the synthesis of cyclic-di-GMP (c-di-GMP) via the condensation of 2 GTP molecules. Cyclic-di-GMP is a second messenger which controls cell surface-associated traits in bacteria. Involved in the regulation of cellulose production. The chain is Probable diguanylate cyclase DgcQ from Escherichia coli O157:H7.